Consider the following 233-residue polypeptide: Ribonuclease HII (233 aa).

The region spanning 21–211 (KIIAGVDEVG…LDALPQWRHL (191 aa)) is the RNase H type-2 domain. 3 residues coordinate a divalent metal cation: D27, E28, and D119.

The protein belongs to the RNase HII family. The cofactor is Mn(2+). Requires Mg(2+) as cofactor.

The protein localises to the cytoplasm. It carries out the reaction Endonucleolytic cleavage to 5'-phosphomonoester.. In terms of biological role, endonuclease that specifically degrades the RNA of RNA-DNA hybrids. The polypeptide is Ribonuclease HII (rnhB) (Streptomyces coelicolor (strain ATCC BAA-471 / A3(2) / M145)).